The primary structure comprises 428 residues: 3-phosphoshikimate 1-carboxyvinyltransferase (428 aa).

3-phosphoshikimate contacts are provided by Lys-21, Ser-22, and Arg-26. Lys-21 is a binding site for phosphoenolpyruvate. Phosphoenolpyruvate is bound by residues Gly-91 and Arg-119. 3-phosphoshikimate is bound by residues Ser-164, Gln-166, Asp-311, and Lys-338. Phosphoenolpyruvate is bound at residue Gln-166. Residue Asp-311 is the Proton acceptor of the active site. Phosphoenolpyruvate contacts are provided by Arg-342 and Arg-383.

It belongs to the EPSP synthase family. Monomer.

The protein resides in the cytoplasm. It carries out the reaction 3-phosphoshikimate + phosphoenolpyruvate = 5-O-(1-carboxyvinyl)-3-phosphoshikimate + phosphate. Its pathway is metabolic intermediate biosynthesis; chorismate biosynthesis; chorismate from D-erythrose 4-phosphate and phosphoenolpyruvate: step 6/7. Catalyzes the transfer of the enolpyruvyl moiety of phosphoenolpyruvate (PEP) to the 5-hydroxyl of shikimate-3-phosphate (S3P) to produce enolpyruvyl shikimate-3-phosphate and inorganic phosphate. This Campylobacter concisus (strain 13826) protein is 3-phosphoshikimate 1-carboxyvinyltransferase.